Here is a 484-residue protein sequence, read N- to C-terminus: RNA polymerase sigma-54 factor 1 (484 aa).

The segment at residues 355-374 is a DNA-binding region (H-T-H motif); it reads NLKAVAEAIQMHESTVSRVT. The short motif at 444 to 452 is the RPON box element; the sequence is ARRTVAKYR. Residues 464–484 form a disordered region; the sequence is RRDNMWSTMNSRASGGTGLDK. Residues 468 to 477 are compositionally biased toward polar residues; the sequence is MWSTMNSRAS.

The protein belongs to the sigma-54 factor family.

Functionally, sigma factors are initiation factors that promote the attachment of RNA polymerase to specific initiation sites and are then released. This sigma factor is responsible for the expression of the nitrogen fixation genes. This chain is RNA polymerase sigma-54 factor 1 (rpoN1), found in Bradyrhizobium diazoefficiens (strain JCM 10833 / BCRC 13528 / IAM 13628 / NBRC 14792 / USDA 110).